The chain runs to 82 residues: RNA-binding protein Hfq (82 aa).

The Sm domain maps to 11-71; sequence DTFLNHVRKT…ISTIMPGAPI (61 aa).

The protein belongs to the Hfq family. As to quaternary structure, homohexamer.

Functionally, RNA chaperone that binds small regulatory RNA (sRNAs) and mRNAs to facilitate mRNA translational regulation in response to envelope stress, environmental stress and changes in metabolite concentrations. Also binds with high specificity to tRNAs. The protein is RNA-binding protein Hfq of Nitrobacter winogradskyi (strain ATCC 25391 / DSM 10237 / CIP 104748 / NCIMB 11846 / Nb-255).